A 144-amino-acid polypeptide reads, in one-letter code: Deoxyuridine 5'-triphosphate nucleotidohydrolase (144 aa).

Substrate-binding positions include 63–65, N76, and 80–82; these read RSG and TID.

Belongs to the dUTPase family. It depends on Mg(2+) as a cofactor.

The enzyme catalyses dUTP + H2O = dUMP + diphosphate + H(+). Its pathway is pyrimidine metabolism; dUMP biosynthesis; dUMP from dCTP (dUTP route): step 2/2. This enzyme is involved in nucleotide metabolism: it produces dUMP, the immediate precursor of thymidine nucleotides and it decreases the intracellular concentration of dUTP so that uracil cannot be incorporated into DNA. This chain is Deoxyuridine 5'-triphosphate nucleotidohydrolase, found in Porphyromonas gingivalis (strain ATCC 33277 / DSM 20709 / CIP 103683 / JCM 12257 / NCTC 11834 / 2561).